A 150-amino-acid chain; its full sequence is Urease accessory protein UreE (150 aa).

Belongs to the UreE family.

It is found in the cytoplasm. Its function is as follows. Involved in urease metallocenter assembly. Binds nickel. Probably functions as a nickel donor during metallocenter assembly. This chain is Urease accessory protein UreE, found in Staphylococcus aureus (strain Mu3 / ATCC 700698).